Here is a 180-residue protein sequence, read N- to C-terminus: GTP cyclohydrolase 1 (180 aa).

Zn(2+)-binding residues include C71, H74, and C142.

This sequence belongs to the GTP cyclohydrolase I family. Toroid-shaped homodecamer, composed of two pentamers of five dimers.

The catalysed reaction is GTP + H2O = 7,8-dihydroneopterin 3'-triphosphate + formate + H(+). It functions in the pathway cofactor biosynthesis; 7,8-dihydroneopterin triphosphate biosynthesis; 7,8-dihydroneopterin triphosphate from GTP: step 1/1. This Helicobacter pylori (strain HPAG1) protein is GTP cyclohydrolase 1.